Consider the following 812-residue polypeptide: Ribonucleoside-diphosphate reductase large subunit (812 aa).

The region spanning leucine 12–lysine 103 is the ATP-cone domain. ATP is bound by residues lysine 16 to arginine 17, glutamate 22 to lysine 28, threonine 64, and aspartate 68. 2 residues coordinate GDP: serine 213 and serine 228. Cysteine 229 and cysteine 455 are oxidised to a cystine. Residues aspartate 237–isoleucine 239, lysine 254, arginine 267, and cysteine 274–glycine 275 contribute to the dTTP site. Asparagine 438 contacts GDP. Asparagine 438 acts as the Proton acceptor in catalysis. Residue cysteine 440 is the Cysteine radical intermediate of the active site. GDP-binding positions include glutamate 442 and threonine 615–threonine 618. Glutamate 442 functions as the Proton acceptor in the catalytic mechanism. The residue at position 778 (threonine 778) is a Phosphothreonine. Serine 782 carries the post-translational modification Phosphoserine. Position 786 is a phosphotyrosine (tyrosine 786).

It belongs to the ribonucleoside diphosphate reductase large chain family. Heterodimer of a large and a small subunit.

It catalyses the reaction a 2'-deoxyribonucleoside 5'-diphosphate + [thioredoxin]-disulfide + H2O = a ribonucleoside 5'-diphosphate + [thioredoxin]-dithiol. With respect to regulation, under complex allosteric control mediated by deoxynucleoside triphosphates and ATP binding to separate specificity and activation sites on the M1 subunit. The type of nucleotide bound at the specificity site determines substrate preference. It seems probable that ATP makes the enzyme reduce CDP and UDP, dGTP favors ADP reduction and dTTP favors GDP reduction. Stimulated by ATP and inhibited by dATP binding to the activity site. Provides the precursors necessary for DNA synthesis. Catalyzes the biosynthesis of deoxyribonucleotides from the corresponding ribonucleotides. This Drosophila melanogaster (Fruit fly) protein is Ribonucleoside-diphosphate reductase large subunit (RnrL).